Here is a 229-residue protein sequence, read N- to C-terminus: MASPSDASRRRQATVKAKVVLLGEGAVGKTSLVLRYSENKFNDKHEQTLQASFVEKRLNIGGKRIQLAIWDTAGQERYHALGPIYYRDSQGAIIVYDITDEDSFHKARNWIKELKRMLGDKVTLCIVGNKIDLDRQRTVSEKDALEYAESVGAKHYYTSAKQSKGVAELFLDLAKRILEANPPSSSTPPESQRGAPSSHPPSQPRQRSTLIVTDDSEQPSPKQGGGCCS.

23-30 (GEGAVGKT) lines the GTP pocket. The Effector region motif lies at 45–53 (HEQTLQASF). GTP contacts are provided by residues 71 to 75 (DTAGQ) and 129 to 132 (NKID). The tract at residues 179–229 (EANPPSSSTPPESQRGAPSSHPPSQPRQRSTLIVTDDSEQPSPKQGGGCCS) is disordered. S-geranylgeranyl cysteine attachment occurs at residues cysteine 227 and cysteine 228.

It belongs to the small GTPase superfamily. Rab family.

The protein resides in the golgi apparatus membrane. In Geodia cydonium (Sponge), this protein is Ras-related protein Rab-21 (RAB21).